The sequence spans 200 residues: Probable fatty acid desaturase MIMI_L630 (200 aa).

2 helical membrane-spanning segments follow: residues 9–29 (FIQI…YHWI) and 79–99 (IGPL…FIMI).

Belongs to the fatty acid desaturase CarF family.

It localises to the membrane. The polypeptide is Probable fatty acid desaturase MIMI_L630 (Acanthamoeba polyphaga mimivirus (APMV)).